Reading from the N-terminus, the 809-residue chain is Lon protease (809 aa).

The Lon N-terminal domain maps to 20 to 216; that stretch reads LPLLALRDVV…ELMNYLMNQS (197 aa). 369 to 376 lines the ATP pocket; sequence GPPGVGKT. The region spanning 606–787 is the Lon proteolytic domain; that stretch reads EAQVGRVNGL…DEILPLALTS (182 aa). Active-site residues include serine 693 and lysine 736.

It belongs to the peptidase S16 family. Homohexamer. Organized in a ring with a central cavity.

It is found in the cytoplasm. The catalysed reaction is Hydrolysis of proteins in presence of ATP.. Its function is as follows. ATP-dependent serine protease that mediates the selective degradation of mutant and abnormal proteins as well as certain short-lived regulatory proteins. Required for cellular homeostasis and for survival from DNA damage and developmental changes induced by stress. Degrades polypeptides processively to yield small peptide fragments that are 5 to 10 amino acids long. Binds to DNA in a double-stranded, site-specific manner. The protein is Lon protease of Acinetobacter baumannii (strain AB307-0294).